The chain runs to 232 residues: Ribonuclease 3 (232 aa).

The 130-residue stretch at 5–134 (KKALLEQFDL…FLGALLLDKG (130 aa)) folds into the RNase III domain. Glutamate 47 provides a ligand contact to Mg(2+). Residue aspartate 51 is part of the active site. The Mg(2+) site is built by aspartate 120 and glutamate 123. The active site involves glutamate 123. The DRBM domain maps to 160–229 (DYKTKLQELL…AKNAFEKESS (70 aa)). The disordered stretch occupies residues 203 to 232 (KSGQGQGRSKKLAEQEAAKNAFEKESSSCF). The span at 213–232 (KLAEQEAAKNAFEKESSSCF) shows a compositional bias: basic and acidic residues.

Belongs to the ribonuclease III family. In terms of assembly, homodimer. Mg(2+) serves as cofactor.

Its subcellular location is the cytoplasm. It catalyses the reaction Endonucleolytic cleavage to 5'-phosphomonoester.. Functionally, digests double-stranded RNA. Involved in the processing of primary rRNA transcript to yield the immediate precursors to the large and small rRNAs (23S and 16S). Processes some mRNAs, and tRNAs when they are encoded in the rRNA operon. Processes pre-crRNA and tracrRNA of type II CRISPR loci if present in the organism. The sequence is that of Ribonuclease 3 from Streptococcus sanguinis (strain SK36).